The following is a 295-amino-acid chain: Small ribosomal subunit protein mS23 (295 aa).

The segment at 249-295 (IGSVVEEEKSQSSLFEDLLSNDNLQSEPEVEQSGQQQQQEQPKQETN) is disordered. The span at 273-289 (QSEPEVEQSGQQQQQEQ) shows a compositional bias: low complexity.

Belongs to the mitochondrion-specific ribosomal protein mS23 family. As to quaternary structure, component of the mitochondrial small ribosomal subunit (mt-SSU).

The protein resides in the mitochondrion. Component of the mitochondrial ribosome (mitoribosome), a dedicated translation machinery responsible for the synthesis of mitochondrial genome-encoded proteins, including at least some of the essential transmembrane subunits of the mitochondrial respiratory chain. The mitoribosomes are attached to the mitochondrial inner membrane and translation products are cotranslationally integrated into the membrane. The chain is Small ribosomal subunit protein mS23 (RSM25) from Candida albicans (strain SC5314 / ATCC MYA-2876) (Yeast).